A 346-amino-acid chain; its full sequence is Uroporphyrinogen decarboxylase (346 aa).

Substrate is bound by residues 23–27 (RQAGR), Asp72, Tyr149, Thr204, and His318.

It belongs to the uroporphyrinogen decarboxylase family. Homodimer.

It is found in the cytoplasm. It carries out the reaction uroporphyrinogen III + 4 H(+) = coproporphyrinogen III + 4 CO2. It functions in the pathway porphyrin-containing compound metabolism; protoporphyrin-IX biosynthesis; coproporphyrinogen-III from 5-aminolevulinate: step 4/4. Catalyzes the decarboxylation of four acetate groups of uroporphyrinogen-III to yield coproporphyrinogen-III. This is Uroporphyrinogen decarboxylase from Synechococcus sp. (strain JA-2-3B'a(2-13)) (Cyanobacteria bacterium Yellowstone B-Prime).